The following is a 457-amino-acid chain: Fibrinogen C domain-containing protein 1-A (457 aa).

The interval methionine 1 to glutamine 20 is disordered. The Cytoplasmic segment spans residues methionine 1–cysteine 33. A helical; Signal-anchor for type II membrane protein membrane pass occupies residues threonine 34–methionine 54. Residues asparagine 55–asparagine 457 lie on the Extracellular side of the membrane. The interval alanine 216–serine 235 is disordered. The Fibrinogen C-terminal domain maps to cysteine 231 to arginine 454. N-linked (GlcNAc...) asparagine glycosylation is present at asparagine 233. A disulfide bridge connects residues cysteine 240 and cysteine 269. An N-linked (GlcNAc...) asparagine glycan is attached at asparagine 336. Residues aspartate 389 and aspartate 391 each contribute to the Ca(2+) site. A disulfide bridge connects residues cysteine 397 and cysteine 410.

As to quaternary structure, homotetramer; disulfide-linked.

The protein resides in the membrane. In terms of biological role, acetyl group-binding receptor which shows a calcium-dependent binding to acetylated structures such as chitin, some N-acetylated carbohydrates, and amino acids. In Xenopus laevis (African clawed frog), this protein is Fibrinogen C domain-containing protein 1-A (fibcd1-a).